The following is a 721-amino-acid chain: Angiomotin-like 2a (721 aa).

The segment at Gln-35–His-84 is disordered. Low complexity predominate over residues Ser-49–Ser-68. Tyr-103 carries the post-translational modification Phosphotyrosine; by FGFR1. The tract at residues Asp-169–Ser-214 is disordered. The span at Pro-172 to Gln-198 shows a compositional bias: polar residues. Positions Ala-275–Glu-531 form a coiled coil. The segment covering Ile-554–Asn-567 has biased composition (polar residues). 2 disordered regions span residues Ile-554 to His-575 and Asp-666 to Ser-709. Low complexity predominate over residues Ser-688–Ser-702. The PDZ-binding signature appears at Glu-718–Ile-721.

This sequence belongs to the angiomotin family. As to quaternary structure, interacts with SRC. Post-translationally, phosphorylation at Tyr-103 is necessary for efficient binding to SRC and synergistically functioning with SRC to activate the downstream MAPK pathway. Expressed in endothelial cells.

Its subcellular location is the recycling endosome. It is found in the cytoplasm. The protein localises to the cell projection. It localises to the podosome. The protein resides in the cell junction. Functionally, required for proper architecture of actin filaments and for cell movements during embryogenesis. Plays a role in the radial actin fiber architecture in skin epithelial cells, thereby maintains cell geometry, size and cell interconnectivity within the skin. Plays an important role in coupling actin fibers to cell junctions in endothelial cells and is therefore required for correct endothelial cell morphology and maintenance of dorsal aorta lumen expansion during embryogenesis. May further play a role in the polarity, proliferation and migration of endothelial cells, and therefore participates in angiogenesis. Inhibits the Wnt/beta-catenin signaling pathway, probably by recruiting CTNNB1 to recycling endosomes and hence preventing its translocation to the nucleus. Regulates the translocation of phosphorylated SRC to peripheral cell-matrix adhesion sites. Selectively promotes FGF-induced MAPK activation through SRC. The chain is Angiomotin-like 2a (amotl2a) from Danio rerio (Zebrafish).